We begin with the raw amino-acid sequence, 277 residues long: MKRFTVLILAIFVAASTVEADVRFSLSGSSSTSYSKFIGDLRKALPSNGTVYNITLLLSSASGASRYTLMTLSNYDGKAITVAVDVTNVYIMGYLVNSTSYFFNESDAKLASQYVFKGSTIVTLPYSGNYEKLQTAAGKIREKIPLGFPALDSAITTLFHYDSTAAAAAFLVIIQTTAEASRFKYIEGQIIERISKNQVPSLATISLENEWSALSKQIQLAQTNNGTFKTPVVITDDKGQRVEITNVTSKVVTKNIQLLLNYKQNVAAFDEDVSAKH.

An N-terminal signal peptide occupies residues 1 to 19 (MKRFTVLILAIFVAASTVE). Glu179 is an active-site residue.

The protein belongs to the ribosome-inactivating protein family. Type 1 RIP subfamily.

The catalysed reaction is Endohydrolysis of the N-glycosidic bond at one specific adenosine on the 28S rRNA.. The polypeptide is Ribosome-inactivating protein luffin-alpha (Luffa aegyptiaca (Sponge gourd)).